The sequence spans 159 residues: Cystatin-9 (159 aa).

The signal sequence occupies residues 1–28 (MSSPQRRKAMPWALSLLLMGFQLLVTYA).

This sequence belongs to the cystatin family. Expressed in heart, placenta, lung, liver, skeletal muscle and pancreas. Not expressed in brain. Expressed in epididymis, kidney, testis, spinal cord, and thymus with a strong expression in epididymis and kidney and a weak expression in the spinal cord and thymus.

It is found in the secreted. In terms of biological role, may be involved in testis development. May play a role in hematopoietic differentiation or inflammation. Has immunomodulatory and antimicrobial functions against Francisella tularensis, a Gram-negative bacteria. This Homo sapiens (Human) protein is Cystatin-9 (CST9).